Consider the following 464-residue polypeptide: 3-isopropylmalate dehydratase large subunit (464 aa).

Cys-337, Cys-397, and Cys-400 together coordinate [4Fe-4S] cluster.

This sequence belongs to the aconitase/IPM isomerase family. LeuC type 1 subfamily. As to quaternary structure, heterodimer of LeuC and LeuD. Requires [4Fe-4S] cluster as cofactor.

The enzyme catalyses (2R,3S)-3-isopropylmalate = (2S)-2-isopropylmalate. It participates in amino-acid biosynthesis; L-leucine biosynthesis; L-leucine from 3-methyl-2-oxobutanoate: step 2/4. Catalyzes the isomerization between 2-isopropylmalate and 3-isopropylmalate, via the formation of 2-isopropylmaleate. In Bacillus cereus (strain AH187), this protein is 3-isopropylmalate dehydratase large subunit.